The chain runs to 341 residues: D-aspartate oxidase (341 aa).

7 residues coordinate FAD: Asp36, Lys37, Thr43, Ser44, Met50, Gly307, and Ile311. The short motif at 339–341 (SKL) is the Microbody targeting signal element.

The protein belongs to the DAMOX/DASOX family. In terms of assembly, homotetramer. Interacts with PEX5; the interaction is direct and required for localization of DDO to the peroxisome. It depends on FAD as a cofactor. As to expression, expressed in epithelial cells of the renal proximal tubules (not detected in the glomeruli or renal distal tubules), liver, right atrium of heart, lung, chief cells of the gastric mucosa, choroid plexus, pia mater, brain stem, midbrain, pons, medulla oblongata, hypothalamus, hippocampus, cerebral cortex, cerebellum, ependyma, olfactory bulb and the pituitary, pineal, thyroid and adrenal glands (at protein level).

It localises to the peroxisome matrix. The protein localises to the cytoplasm. The protein resides in the cytosol. It catalyses the reaction D-aspartate + O2 + H2O = oxaloacetate + H2O2 + NH4(+). It carries out the reaction D-glutamate + O2 + H2O = H2O2 + 2-oxoglutarate + NH4(+). Its function is as follows. Selectively catalyzes the oxidative deamination of acidic amino acids. Suppresses the level of D-aspartate in the brain, an amino acid that can act as an agonist for glutamate receptors. Protects the organism from the toxicity of D-amino acids. May also function in the intestine. The sequence is that of D-aspartate oxidase (DDO) from Sus scrofa (Pig).